The chain runs to 255 residues: Acetylglutamate kinase (255 aa).

Residues 40 to 41, arginine 62, and asparagine 153 contribute to the substrate site; that span reads GG.

Belongs to the acetylglutamate kinase family. ArgB subfamily.

It localises to the cytoplasm. It catalyses the reaction N-acetyl-L-glutamate + ATP = N-acetyl-L-glutamyl 5-phosphate + ADP. It participates in amino-acid biosynthesis; L-arginine biosynthesis; N(2)-acetyl-L-ornithine from L-glutamate: step 2/4. Functionally, catalyzes the ATP-dependent phosphorylation of N-acetyl-L-glutamate. In Bacillus cereus (strain ATCC 14579 / DSM 31 / CCUG 7414 / JCM 2152 / NBRC 15305 / NCIMB 9373 / NCTC 2599 / NRRL B-3711), this protein is Acetylglutamate kinase.